A 341-amino-acid chain; its full sequence is Protein P3 (341 aa).

Positions 46–175 (RARQAANPVS…QTKNAPDANE (130 aa)) are disordered. Positions 97 to 116 (KSKRAVRREKRRTAAKKATN) are enriched in basic residues. Over residues 142–152 (SYLSSLLSSPS) the composition is skewed to low complexity.

Belongs to the nepovirus protein P3 family.

The chain is Protein P3 from Vitis rupestris (Grape).